A 204-amino-acid polypeptide reads, in one-letter code: Pro-glucagon (204 aa).

The N-terminal stretch at 1–20 is a signal peptide; sequence MTSMYFVAGLLLMIVQGSWQ. Residues 84–109 constitute a propeptide that is removed on maturation; sequence SGQQGVEEREKENLLDQLSSNGLARH. Position 145 is an arginine amide (Arg-145). 2 propeptides span residues 149–161 and 197–204; these read DFLEEAGTADDIG and RDLLGEYQ.

This sequence belongs to the glucagon family. Isoform LPII is expressed in both pancreas and intestine. Expression of isoform LPI is restricted to the pancreas. Neither isoform is detected in salivary glands.

It is found in the secreted. In terms of biological role, plays a key role in glucose metabolism and homeostasis. Regulates blood glucose by increasing gluconeogenesis and decreasing glycolysis. Potent stimulator of glucose-dependent insulin release. Plays important roles on gastric motility and the suppression of plasma glucagon levels. Functionally, stimulates intestinal growth and up-regulates villus height in the small intestine, concomitant with increased crypt cell proliferation and decreased enterocyte apoptosis. This chain is Pro-glucagon (GCG), found in Heloderma suspectum (Gila monster).